The sequence spans 269 residues: Diaminopimelate epimerase (269 aa).

Positions 13, 46, and 65 each coordinate substrate. Cys74 serves as the catalytic Proton donor. Residues 75–76 (GN), Asn149, Asn182, and 200–201 (ER) contribute to the substrate site. Residue Cys209 is the Proton acceptor of the active site. Position 210–211 (210–211 (GT)) interacts with substrate.

This sequence belongs to the diaminopimelate epimerase family. In terms of assembly, homodimer.

The protein localises to the cytoplasm. The catalysed reaction is (2S,6S)-2,6-diaminopimelate = meso-2,6-diaminopimelate. The protein operates within amino-acid biosynthesis; L-lysine biosynthesis via DAP pathway; DL-2,6-diaminopimelate from LL-2,6-diaminopimelate: step 1/1. Its function is as follows. Catalyzes the stereoinversion of LL-2,6-diaminopimelate (L,L-DAP) to meso-diaminopimelate (meso-DAP), a precursor of L-lysine and an essential component of the bacterial peptidoglycan. This is Diaminopimelate epimerase from Zymomonas mobilis subsp. mobilis (strain ATCC 31821 / ZM4 / CP4).